We begin with the raw amino-acid sequence, 116 residues long: Ribonuclease P protein component (116 aa).

The protein belongs to the RnpA family. As to quaternary structure, consists of a catalytic RNA component (M1 or rnpB) and a protein subunit.

The enzyme catalyses Endonucleolytic cleavage of RNA, removing 5'-extranucleotides from tRNA precursor.. RNaseP catalyzes the removal of the 5'-leader sequence from pre-tRNA to produce the mature 5'-terminus. It can also cleave other RNA substrates such as 4.5S RNA. The protein component plays an auxiliary but essential role in vivo by binding to the 5'-leader sequence and broadening the substrate specificity of the ribozyme. This Bacillus velezensis (strain DSM 23117 / BGSC 10A6 / LMG 26770 / FZB42) (Bacillus amyloliquefaciens subsp. plantarum) protein is Ribonuclease P protein component.